Here is a 351-residue protein sequence, read N- to C-terminus: DNA polymerase IV (351 aa).

Positions 4 to 185 (IIHIDMDCFF…LPLAKIPGVG (182 aa)) constitute a UmuC domain. Positions 8 and 103 each coordinate Mg(2+). Glu104 is a catalytic residue.

The protein belongs to the DNA polymerase type-Y family. As to quaternary structure, monomer. Mg(2+) is required as a cofactor.

The protein localises to the cytoplasm. The catalysed reaction is DNA(n) + a 2'-deoxyribonucleoside 5'-triphosphate = DNA(n+1) + diphosphate. In terms of biological role, poorly processive, error-prone DNA polymerase involved in untargeted mutagenesis. Copies undamaged DNA at stalled replication forks, which arise in vivo from mismatched or misaligned primer ends. These misaligned primers can be extended by PolIV. Exhibits no 3'-5' exonuclease (proofreading) activity. May be involved in translesional synthesis, in conjunction with the beta clamp from PolIII. The polypeptide is DNA polymerase IV (Salmonella paratyphi A (strain ATCC 9150 / SARB42)).